A 142-amino-acid chain; its full sequence is Malate dehydrogenase, mitochondrial (142 aa).

NAD(+) contacts are provided by residues 1 to 6 and aspartate 26; that span reads ASGGIG. Residues arginine 73 and arginine 79 each coordinate substrate. NAD(+) is bound by residues asparagine 86 and 109-111; that span reads ITN. Asparagine 111 provides a ligand contact to substrate.

This sequence belongs to the LDH/MDH superfamily. MDH type 1 family. In terms of assembly, homodimer.

The protein localises to the mitochondrion matrix. The catalysed reaction is (S)-malate + NAD(+) = oxaloacetate + NADH + H(+). The protein is Malate dehydrogenase, mitochondrial of Schistosoma mansoni (Blood fluke).